The primary structure comprises 324 residues: MGNLLKVLTCTDLEQGPNFFLDFENAQPTESEKEIYNQVNVVLKDAEGILEDLQSYRGAGHEIREAIQHPADEKLQEKAWGAVVPLVGKLKKFYEFSQRLEAALRGLLGALTSTPYSPTQHLEREQALAKQFAEILHFTLRFDELKMTNPAIQNDFSYYRRTLSRMRINNVPAEGENEVNNELANRMSLFYAEATPMLKTLSDATTKFVSENKNLPIENTTDCLSTMASVCRVMLETPEYRSRFTNEETVSFCLRVMVGVIILYDHVHPVGAFAKTSKIDMKGCIKVLKDQPPNSVEGLLNALRYTTKHLNDETTSKQIRSMLQ.

A lipid anchor (N-myristoyl glycine) is attached at Gly-2. A Glycyl lysine isopeptide (Lys-Gly) (interchain with G-Cter in ubiquitin) cross-link involves residue Lys-74.

Belongs to the CYRI family. Interacts with RAC1 (GTP-bound form preferentially). In terms of processing, ubiquitinated at Lys-74 upon Salmonella bacterial infection. Expressed in pancreatic ducts (at protein level).

Its subcellular location is the membrane. The protein localises to the mitochondrion. In terms of biological role, negatively regulates RAC1 signaling and RAC1-driven cytoskeletal remodeling. Regulates chemotaxis, cell migration and epithelial polarization by controlling the polarity, plasticity, duration and extent of protrusions. Limits Rac1 mediated activation of the Scar/WAVE complex, focuses protrusion signals and regulates pseudopod complexity by inhibiting Scar/WAVE-induced actin polymerization. Protects against Salmonella bacterial infection. Attenuates processes such as macropinocytosis, phagocytosis and cell migration and restrict sopE-mediated bacterial entry. Also restricts infection mediated by Mycobacterium tuberculosis and Listeria monocytogenes. Involved in the regulation of mitochondrial dynamics and oxidative stress. This chain is CYFIP-related Rac1 interactor B (Cyrib), found in Mus musculus (Mouse).